Reading from the N-terminus, the 125-residue chain is Ribonuclease P protein component 1 (125 aa).

The segment covering M1 to P13 has biased composition (basic and acidic residues). The disordered stretch occupies residues M1–A24.

It belongs to the eukaryotic/archaeal RNase P protein component 1 family. Consists of a catalytic RNA component and at least 4-5 protein subunits.

Its subcellular location is the cytoplasm. The catalysed reaction is Endonucleolytic cleavage of RNA, removing 5'-extranucleotides from tRNA precursor.. Its function is as follows. Part of ribonuclease P, a protein complex that generates mature tRNA molecules by cleaving their 5'-ends. This Thermococcus onnurineus (strain NA1) protein is Ribonuclease P protein component 1.